We begin with the raw amino-acid sequence, 468 residues long: 3-isopropylmalate dehydratase large subunit (468 aa).

Positions 349, 409, and 412 each coordinate [4Fe-4S] cluster.

This sequence belongs to the aconitase/IPM isomerase family. LeuC type 1 subfamily. Heterodimer of LeuC and LeuD. The cofactor is [4Fe-4S] cluster.

The enzyme catalyses (2R,3S)-3-isopropylmalate = (2S)-2-isopropylmalate. It participates in amino-acid biosynthesis; L-leucine biosynthesis; L-leucine from 3-methyl-2-oxobutanoate: step 2/4. Catalyzes the isomerization between 2-isopropylmalate and 3-isopropylmalate, via the formation of 2-isopropylmaleate. The chain is 3-isopropylmalate dehydratase large subunit from Shewanella baltica (strain OS223).